The chain runs to 274 residues: uncharacterized protein (274 aa).

ATP is bound at residue Gly-104 to Ser-111.

This is an uncharacterized protein from Mycoplasma genitalium (strain ATCC 33530 / DSM 19775 / NCTC 10195 / G37) (Mycoplasmoides genitalium).